The following is a 1597-amino-acid chain: THO complex subunit 2 (1597 aa).

Disordered stretches follow at residues 1250 to 1274 (KSQR…SKDR) and 1384 to 1597 (EPYP…RYQR). Residues 1419–1430 (GSSNYRGPSNDR) are compositionally biased toward polar residues. Basic and acidic residues-rich tracts occupy residues 1458 to 1490 (TYND…EYKK), 1500 to 1512 (FPEK…KDSS), 1522 to 1545 (YKRD…ETIR), and 1554 to 1567 (RNTR…RANE). Polar residues predominate over residues 1568-1582 (NQRYNGNRKSNTQAL).

The protein belongs to the THOC2 family. Component of the THO complex, which is composed of HPR1, MFT1, THO2 and THP2. Together with SUB2, TEX1 and YRA1, THO forms the transcription/export (TREX) complex. THO associates with DNA and RNA in vitro.

It is found in the nucleus. In terms of biological role, component the THO subcomplex of the TREX complex, which operates in coupling transcription elongation to mRNA export. The THO complex is recruited to transcribed genes and moves along the gene with the elongating polymerase during transcription. THO is important for stabilizing nascent RNA in the RNA polymerase II elongation complex by preventing formation of DNA:RNA hybrids behind the elongating polymerase. It functions in cotranscriptional formation of an export-competent messenger ribonucleoprotein particle (mRNP) by facilitating the loading of ATP-dependent RNA helicase SUB2 and the mRNA export factor YRA1 along the nascent mRNA. The sequence is that of THO complex subunit 2 (THO2) from Saccharomyces cerevisiae (strain ATCC 204508 / S288c) (Baker's yeast).